The primary structure comprises 208 residues: Uracil phosphoribosyltransferase (208 aa).

Residues Arg77, Arg102, and 128–136 (DPMLATGGT) contribute to the 5-phospho-alpha-D-ribose 1-diphosphate site. Uracil-binding positions include Ile191 and 196–198 (GDI). 5-phospho-alpha-D-ribose 1-diphosphate is bound at residue Asp197.

This sequence belongs to the UPRTase family. Mg(2+) serves as cofactor.

The enzyme catalyses UMP + diphosphate = 5-phospho-alpha-D-ribose 1-diphosphate + uracil. Its pathway is pyrimidine metabolism; UMP biosynthesis via salvage pathway; UMP from uracil: step 1/1. Allosterically activated by GTP. Functionally, catalyzes the conversion of uracil and 5-phospho-alpha-D-ribose 1-diphosphate (PRPP) to UMP and diphosphate. This is Uracil phosphoribosyltransferase from Aquifex aeolicus (strain VF5).